An 87-amino-acid chain; its full sequence is Putative defensin-like protein 304 (87 aa).

Positions 1 to 19 are cleaved as a signal peptide; sequence MKSNKVTFFLGLFLVSAFC. 3 disulfide bridges follow: Cys-27-Cys-46, Cys-33-Cys-51, and Cys-40-Cys-53.

Belongs to the DEFL family.

It localises to the secreted. In Arabidopsis thaliana (Mouse-ear cress), this protein is Putative defensin-like protein 304.